A 315-amino-acid chain; its full sequence is Putative steroid dehydrogenase 3 (315 aa).

47–76 (ASWAVITGGTDGIGKSFSFELAKRGFNIYI) lines the NADP(+) pocket. The active site involves Y202.

This sequence belongs to the short-chain dehydrogenases/reductases (SDR) family. 17-beta-HSD 3 subfamily.

This Caenorhabditis elegans protein is Putative steroid dehydrogenase 3 (stdh-3).